A 1645-amino-acid polypeptide reads, in one-letter code: Thrombospondin type-1 domain-containing protein 7A (1645 aa).

The N-terminal stretch at 1–38 (MGLRAGRLASPSRGVLQLLRLPLLLLLLLSSGARGAAA) is a signal peptide. Topologically, residues 39–1595 (QGDTEVPTLY…FGPDGRLKTW (1557 aa)) are extracellular. TSP type-1 domains follow at residues 46–105 (TLYL…KVCD), 109–181 (ELYD…IPCQ), and 183–236 (DCIV…NPCE). Asn-223 is a glycosylation site (N-linked (GlcNAc...) asparagine). The interval 255-300 (PHTRQARQARRRGKNKEREKERGKAVKDPEARELIKKKRNRNRQNR) is disordered. Residues 256–304 (HTRQARQARRRGKNKEREKERGKAVKDPEARELIKKKRNRNRQNRQENR) adopt a coiled-coil conformation. The span at 258 to 269 (RQARQARRRGKN) shows a compositional bias: basic residues. Residues 270 to 288 (KEREKERGKAVKDPEAREL) are compositionally biased toward basic and acidic residues. Basic residues predominate over residues 289–298 (IKKKRNRNRQ). An N-linked (GlcNAc...) asparagine glycan is attached at Asn-321. TSP type-1 domains follow at residues 349-405 (ECQV…VSQG), 412-499 (ATYG…VPCP), 501-563 (ECEV…PSCY), 623-684 (DCVL…HPCT), 685-758 (VYHW…LPCR), 760-820 (DCVV…PTCH), 821-893 (SYRW…IPCQ), 895-948 (DCQF…CPCD), 949-1022 (KYNA…IPCP), 1024-1084 (DCKL…SDCN), 1085-1152 (QYIW…LPCP), 1154-1208 (DCVI…KNCY), 1209-1272 (HYDY…VECP), 1274-1329 (NCQL…KPCY), 1330-1400 (RWQY…QPCP), and 1402-1463 (DCYL…GQCY). Disulfide bonds link Cys-424-Cys-494, Cys-444-Cys-498, and Cys-455-Cys-483. N-linked (GlcNAc...) asparagine glycosylation occurs at Asn-439. Asn-489 carries N-linked (GlcNAc...) asparagine glycosylation. 2 cysteine pairs are disulfide-bonded: Cys-624–Cys-666 and Cys-635–Cys-639. Asn-668 carries an N-linked (GlcNAc...) asparagine glycan. Cystine bridges form between Cys-678–Cys-683, Cys-696–Cys-753, Cys-717–Cys-757, Cys-728–Cys-741, Cys-761–Cys-803, Cys-772–Cys-776, and Cys-813–Cys-819. Residue Asn-706 is glycosylated (N-linked (GlcNAc...) asparagine). Asn-957 carries N-linked (GlcNAc...) asparagine glycosylation. 6 disulfides stabilise this stretch: Cys-961–Cys-1017, Cys-983–Cys-1021, Cys-994–Cys-1007, Cys-1025–Cys-1062, Cys-1036–Cys-1040, and Cys-1079–Cys-1083. N-linked (GlcNAc...) asparagine glycosylation occurs at Asn-1032. Cys-1201 and Cys-1207 form a disulfide bridge. Asn-1213 carries N-linked (GlcNAc...) asparagine glycosylation. Intrachain disulfides connect Cys-1220/Cys-1267, Cys-1228/Cys-1271, Cys-1239/Cys-1252, Cys-1275/Cys-1313, Cys-1286/Cys-1290, Cys-1323/Cys-1328, Cys-1339/Cys-1395, Cys-1346/Cys-1399, Cys-1357/Cys-1376, Cys-1403/Cys-1447, Cys-1414/Cys-1418, and Cys-1457/Cys-1462. Residue Asn-1264 is glycosylated (N-linked (GlcNAc...) asparagine). Asn-1354 carries N-linked (GlcNAc...) asparagine glycosylation. N-linked (GlcNAc...) asparagine glycans are attached at residues Asn-1488 and Asn-1535. A helical membrane pass occupies residues 1596 to 1616 (VYGVAAGAFVLLVFIVSMIYL). The Cytoplasmic segment spans residues 1617–1645 (ACKKPKKPQRRQNNRLKPLTLAYDGDADM).

In terms of processing, proteolytic cleavage in the extracellular region generates a 210 kDa soluble form. Extensively N-glycosylated. Detected on kidney podocytes along the glomerular capillary wall (at protein level).

The protein localises to the cell membrane. It localises to the cell projection. Its subcellular location is the secreted. Functionally, plays a role in actin cytoskeleton rearrangement. The soluble form promotes endothelial cell migration and filopodia formation during sprouting angiogenesis via a FAK-dependent mechanism. The protein is Thrombospondin type-1 domain-containing protein 7A (Thsd7a) of Mus musculus (Mouse).